Consider the following 798-residue polypeptide: MFRKRNLVLDLLRRCYIETLIPRGLWSRTISTFPKSALLATDNAEMASKETGMFSLAGELASLVEESSSHVDDDSKPRSRMELKRSLELRLKKRVKEQCINGKFSDLLKKVIARPETLRDAYDCIRLNSNVSITERNGSVAFDSIAEELSSGVFDVASNTFSIVARDKTKEVLVLPSVALKVVQEAIRIVLEVVFSPHFSKISHSCRSGRGRASALKYINNNISRSDWCFTLSLNKKLDVSVFENLLSVMEEKVEDSSLSILLRSMFEARVLNLEFGGFPKGHGLPQEGVLSRVLMNIYLDRFDHEFYRISMRHEALGLDSKTDEDSPGSKLRSWFRRQAGEQGLKSTTEQDVALRVYCCRFMDEIYFSVSGPKKVASDIRSEAIGFLRNSLHLDITDETDPSPCEATSGLRVLGTLVRKNVRESPTVKAVHKLKEKVRLFALQKEEAWTLGTVRIGKKWLGHGLKKVKESEIKGLADSNSTLSQISCHRKAGMETDHWYKILLRIWMEDVLRTSADRSEEFVLSKHVVEPTVPQELRDAFYKFQNAAAAYVSSETANLEALLPCPQSHDRPVFFGDVVAPTNAIGRRLYRYGLITAKGYARSNSMLILLDTAQIIDWYSGLVRRWVIWYEGCSNFDEIKALIDNQIRMSCIRTLAAKYRIHENEIEKRLDLELSTIPSAEDIEQEIQHEKLDSPAFDRDEHLTYGLSNSGLCLLSLARLVSESRPCNCFVIGCSMAAPAVYTLHAMERQKFPGWKTGFSVCIPSSLNGRRIGLCKQHLKDLYIGQISLQAVDFGAWR.

The N-terminal 16 residues, 1-16, are a transit peptide targeting the mitochondrion; the sequence is MFRKRNLVLDLLRRCY. The tract at residues 578-665 is intron maturase type-2; that stretch reads VVAPTNAIGR…AAKYRIHENE (88 aa). A THAP-type zinc finger spans residues 729-778; the sequence is CFVIGCSMAAPAVYTLHAMERQKFPGWKTGFSVCIPSSLNGRRIGLCKQH.

The protein belongs to the plant nuclear intron maturase (nMat) family.

It is found in the mitochondrion. It localises to the plastid. The protein resides in the chloroplast. Its function is as follows. Nuclear-encoded maturase required for splicing of group-II introns in mitochondria. Involved in NAD1 pre-mRNA processing and maturation of introns 1, 3 and 4. Necessary for mitochondrial biogenesis during early developmental stages. Essential for respiratory holocomplex I biogenesis in mitochondria. The chain is Nuclear intron maturase 4, mitochondrial from Arabidopsis thaliana (Mouse-ear cress).